The sequence spans 241 residues: Co-chaperone protein p23-1 (241 aa).

The CS domain maps to 2–91 (SRHPEVKWAE…AEPERWNKLL (90 aa)). 17 MGG repeats span residues 129–131 (MGG), 132–134 (MGG), 135–137 (MGG), 138–140 (MGG), 141–143 (MGG), 144–146 (MGG), 147–149 (MGG), 150–152 (MGG), 162–164 (MGG), 165–167 (MGG), 168–170 (MGG), 171–173 (MGG), 180–182 (MGG), 183–185 (MGG), 186–188 (MGG), 189–191 (MGG), and 192–194 (MGG). A 17 X 3 AA repeats of M-G-G region spans residues 129–194 (MGGMGGMGGM…GMGGMGGMGG (66 aa)). The interval 188 to 241 (GMGGMGGMEEFEDSDDEEETAKSGDKKDDAVKEEGLATEKAPAAEETTSVKEDK) is disordered. Residues 196 to 206 (EEFEDSDDEEE) are compositionally biased toward acidic residues. The span at 207-224 (TAKSGDKKDDAVKEEGLA) shows a compositional bias: basic and acidic residues. Positions 225–234 (TEKAPAAEET) are enriched in low complexity.

Belongs to the p23/wos2 family. Interacts with HSP90 in an ATP-dependent manner. Interacts with HSP90-5, HSP90-6 and HSP90-7. In terms of tissue distribution, widely expressed but preferentially in the root meristem.

Its subcellular location is the cytoplasm. It localises to the nucleus. Functionally, acts as a co-chaperone for HSP90. Controls root development through the modulation of auxin distribution in the root meristem. In Arabidopsis thaliana (Mouse-ear cress), this protein is Co-chaperone protein p23-1.